The chain runs to 563 residues: Eukaryotic translation initiation factor 3 subunit D-1 (563 aa).

Residues 98–167 form a disordered region; that stretch reads VQKPPHQRGR…GPPPKMRESS (70 aa). A compositionally biased stretch (basic residues) spans 100–121; it reads KPPHQRGRFRNMRNSRSGRGRN. Residue Thr-128 is modified to Phosphothreonine. The interval 291–305 is RNA gate; that stretch reads EFDLLTVNESSVEPP.

This sequence belongs to the eIF-3 subunit D family. Component of the eukaryotic translation initiation factor 3 (eIF-3) complex. The eIF-3 complex interacts with pix.

The protein localises to the cytoplasm. Functionally, mRNA cap-binding component of the eukaryotic translation initiation factor 3 (eIF-3) complex, which is involved in protein synthesis of a specialized repertoire of mRNAs and, together with other initiation factors, stimulates binding of mRNA and methionyl-tRNAi to the 40S ribosome. The eIF-3 complex specifically targets and initiates translation of a subset of mRNAs involved in cell proliferation. In the eIF-3 complex, eif3d specifically recognizes and binds the 7-methylguanosine cap of a subset of mRNAs. The protein is Eukaryotic translation initiation factor 3 subunit D-1 of Drosophila grimshawi (Hawaiian fruit fly).